The following is an 883-amino-acid chain: Serine/threonine-protein phosphatase BSL1 homolog (883 aa).

Kelch repeat units lie at residues 64–113, 221–271, 273–323, and 341–387; these read ASSG…AVGT, MLLL…VFVG, RLHV…DHDA, and QIYI…NRNH. Disordered regions lie at residues 381–402, 430–466, and 499–525; these read ENQNRNHNFNSDSPTTNNSTDK, SHASSEDSLSEGIGSESPLSETSPMPEDLDDGGSLEP, and NESRRMHPSSNDQSYPAKKALNRQRSP. Positions 385–399 are enriched in polar residues; it reads RNHNFNSDSPTTNNS. The Mn(2+) site is built by Asp586, His588, Asp620, and Asn652. The Proton donor role is filled by His653. Mn(2+)-binding residues include His705 and His784. Residues 861 to 883 form a disordered region; it reads QRPPTPTRGRPQSASDRNSLAYI. Residues 872–883 are compositionally biased toward polar residues; the sequence is QSASDRNSLAYI.

It belongs to the PPP phosphatase family. BSU subfamily. Interacts with the phosphorylated form of BSK3. The cofactor is Mn(2+).

The protein localises to the nucleus. It catalyses the reaction O-phospho-L-seryl-[protein] + H2O = L-seryl-[protein] + phosphate. The catalysed reaction is O-phospho-L-threonyl-[protein] + H2O = L-threonyl-[protein] + phosphate. The polypeptide is Serine/threonine-protein phosphatase BSL1 homolog (BSL1) (Oryza sativa subsp. japonica (Rice)).